Reading from the N-terminus, the 202-residue chain is Tetranectin (202 aa).

The signal sequence occupies residues 1–21 (MELWGPCVLLCLFSLLTQVTA). Intrachain disulfides connect cysteine 71/cysteine 81, cysteine 98/cysteine 197, and cysteine 173/cysteine 189. Residues 77–198 (VHMKCFLAFV…CRDKLPYVCQ (122 aa)) form the C-type lectin domain.

In terms of assembly, homotrimer.

Its subcellular location is the secreted. Its function is as follows. Tetranectin binds to plasminogen and to isolated kringle 4. May be involved in the packaging of molecules destined for exocytosis. Plays a role in retinal function. This Bos taurus (Bovine) protein is Tetranectin (CLEC3B).